A 311-amino-acid polypeptide reads, in one-letter code: Ribonuclease Z (311 aa).

Residues H63, H65, D67, H68, H141, D212, and H270 each contribute to the Zn(2+) site. Catalysis depends on D67, which acts as the Proton acceptor.

It belongs to the RNase Z family. Homodimer. It depends on Zn(2+) as a cofactor.

The catalysed reaction is Endonucleolytic cleavage of RNA, removing extra 3' nucleotides from tRNA precursor, generating 3' termini of tRNAs. A 3'-hydroxy group is left at the tRNA terminus and a 5'-phosphoryl group is left at the trailer molecule.. Its function is as follows. Zinc phosphodiesterase, which displays some tRNA 3'-processing endonuclease activity. Probably involved in tRNA maturation, by removing a 3'-trailer from precursor tRNA. This Lactiplantibacillus plantarum (strain ATCC BAA-793 / NCIMB 8826 / WCFS1) (Lactobacillus plantarum) protein is Ribonuclease Z.